Here is a 430-residue protein sequence, read N- to C-terminus: Adenylosuccinate synthetase (430 aa).

GTP-binding positions include 12–18 (GDEGKGK) and 40–42 (GHT). Asp13 acts as the Proton acceptor in catalysis. Residues Asp13 and Gly40 each coordinate Mg(2+). Residues 13–16 (DEGK), 38–41 (NAGH), Thr128, Arg142, Gln223, Thr238, and Arg302 contribute to the IMP site. His41 acts as the Proton donor in catalysis. Residue 298 to 304 (TTTGRPR) coordinates substrate. GTP-binding positions include Arg304, 330–332 (SID), and 412–414 (SVG).

Belongs to the adenylosuccinate synthetase family. In terms of assembly, homodimer. The cofactor is Mg(2+).

The protein resides in the cytoplasm. The catalysed reaction is IMP + L-aspartate + GTP = N(6)-(1,2-dicarboxyethyl)-AMP + GDP + phosphate + 2 H(+). The protein operates within purine metabolism; AMP biosynthesis via de novo pathway; AMP from IMP: step 1/2. Functionally, plays an important role in the de novo pathway of purine nucleotide biosynthesis. Catalyzes the first committed step in the biosynthesis of AMP from IMP. The sequence is that of Adenylosuccinate synthetase from Streptococcus uberis (strain ATCC BAA-854 / 0140J).